We begin with the raw amino-acid sequence, 292 residues long: MPAALVENSQVICEVWASNLEEEMRKIREIVLSYSYIAMDTEFPGVVVRPIGEFRSSIDYQYQLLRCNVDLLKIIQLGLTFTNEKGEYPSGINTWQFNFKFNLTEDMYSQDSIDLLANSGLQFQKHEEEGIDTLHFAELLMTSGVVLCDNVKWLSFHSGYDFGYMVKLLTDSRLPEEEHEFFHILNLFFPSIYDVKYLMKSCKNLKGGLQEVADQLDLQRIGRQHQAGSDSLLTGMAFFRMKELFFEDSIDDAKYCGRLYGLGTGVAQKQNEDVDSAQEKMSILAIINNMQQ.

4 residues coordinate a divalent metal cation: Asp-40, Glu-42, Asp-161, and Asp-230.

This sequence belongs to the CAF1 family. Component of the CCR4-NOT complex; distinct complexes seem to exist that differ in the participation of probably mutually exclusive catalytic subunits; the complex contains two deadenylase subunits, CNOT6 or CNOT6L, and CNOT7 or CNOT8. In the complex interacts directly with CNOT1. Interacts with BTG1, BTG2 and TOB1. Interacts with BTG4.

Its subcellular location is the cytoplasm. The protein localises to the nucleus. It carries out the reaction Exonucleolytic cleavage of poly(A) to 5'-AMP.. Has 3'-5' poly(A) exoribonuclease activity for synthetic poly(A) RNA substrate. Its function seems to be partially redundant with that of CNOT7. Catalytic component of the CCR4-NOT complex which is linked to various cellular processes including bulk mRNA degradation, miRNA-mediated repression, translational repression during translational initiation and general transcription regulation. During miRNA-mediated repression the complex also seems to act as translational repressor during translational initiation. Additional complex functions may be a consequence of its influence on mRNA expression. Associates with members of the BTG family such as TOB1 and BTG2 and is required for their anti-proliferative activity. The sequence is that of CCR4-NOT transcription complex subunit 8 (CNOT8) from Homo sapiens (Human).